The sequence spans 587 residues: 5-aminolevulinate synthase, erythroid-specific, mitochondrial (587 aa).

The N-terminal 49 residues, 1–49, are a transit peptide targeting the mitochondrion; that stretch reads MVAAAMLLRSCPVLSKGPTGLLGKVAKTYQFLFGIGRCPILATQGPTCS. A succinyl-CoA-binding site is contributed by arginine 163. Pyridoxal 5'-phosphate-binding residues include cysteine 258 and phenylalanine 259. Succinyl-CoA-binding residues include serine 280 and lysine 299. 3 residues coordinate pyridoxal 5'-phosphate: serine 332, histidine 360, and threonine 388. Lysine 391 is an active-site residue. Residue lysine 391 is modified to N6-(pyridoxal phosphate)lysine. Threonine 420 and threonine 421 together coordinate pyridoxal 5'-phosphate. Threonine 508 lines the succinyl-CoA pocket.

It belongs to the class-II pyridoxal-phosphate-dependent aminotransferase family. As to quaternary structure, homodimer. Interacts with SUCLA2. Requires pyridoxal 5'-phosphate as cofactor. As to expression, erythroid-specific.

It is found in the mitochondrion inner membrane. The enzyme catalyses succinyl-CoA + glycine + H(+) = 5-aminolevulinate + CO2 + CoA. It functions in the pathway porphyrin-containing compound metabolism; protoporphyrin-IX biosynthesis; 5-aminolevulinate from glycine: step 1/1. Its function is as follows. Catalyzes the pyridoxal 5'-phosphate (PLP)-dependent condensation of succinyl-CoA and glycine to form aminolevulinic acid (ALA), with CoA and CO2 as by-products. Contributes significantly to heme formation during erythropoiesis. In Rattus norvegicus (Rat), this protein is 5-aminolevulinate synthase, erythroid-specific, mitochondrial (Alas2).